The primary structure comprises 299 residues: MLHCITTIFLSISRMTMEDGPIAESYFTAYADVCFREFGNHVKFWTTINEANVFTIGGYNDGTSPPGRCSNCSSGNSSTETYIVGHNLLLAHASVSRLYQQKYKDKQGGSVGFSLYAFEFIPQTSSSKDDEIAIQRAKDFFYGWILGPLTFGDYPDEMKRAVGSRLPIFSKEESEQVKGSSDFIGIMHYFPALVENIKLKPSLSRNTDFYSDMGVSLTYLGNFSGFGYDVFPWAMESVLEYIKQTYGNPPVYILENGTPMKPDLELQQKDTRRIEYLQAYIGAVLKAVRNGSDTRGYFV.

An N-terminal signal peptide occupies residues 1-16; that stretch reads MLHCITTIFLSISRMT. Position 49–50 (49–50) interacts with a beta-D-glucoside; the sequence is NE. Residue glutamate 50 is the Proton donor of the active site. A disulfide bond links cysteine 69 and cysteine 72. N-linked (GlcNAc...) asparagine glycans are attached at residues asparagine 71 and asparagine 76. A beta-D-glucoside is bound at residue tyrosine 189. A glycan (N-linked (GlcNAc...) asparagine) is linked at asparagine 222. Glutamate 255 serves as a coordination point for a beta-D-glucoside. The Nucleophile role is filled by glutamate 255. The N-linked (GlcNAc...) asparagine glycan is linked to asparagine 290.

It belongs to the glycosyl hydrolase 1 family.

It catalyses the reaction Hydrolysis of terminal, non-reducing beta-D-glucosyl residues with release of beta-D-glucose.. This chain is Putative beta-glucosidase 2, found in Arabidopsis thaliana (Mouse-ear cress).